The primary structure comprises 636 residues: 1-deoxy-D-xylulose-5-phosphate synthase (636 aa).

Residues H74 and 115–117 (GHA) each bind thiamine diphosphate. Position 146 (D146) interacts with Mg(2+). Residues 147–148 (GA), N175, Y285, and E368 contribute to the thiamine diphosphate site. N175 is a Mg(2+) binding site.

Belongs to the transketolase family. DXPS subfamily. As to quaternary structure, homodimer. It depends on Mg(2+) as a cofactor. The cofactor is thiamine diphosphate.

It catalyses the reaction D-glyceraldehyde 3-phosphate + pyruvate + H(+) = 1-deoxy-D-xylulose 5-phosphate + CO2. The protein operates within metabolic intermediate biosynthesis; 1-deoxy-D-xylulose 5-phosphate biosynthesis; 1-deoxy-D-xylulose 5-phosphate from D-glyceraldehyde 3-phosphate and pyruvate: step 1/1. Catalyzes the acyloin condensation reaction between C atoms 2 and 3 of pyruvate and glyceraldehyde 3-phosphate to yield 1-deoxy-D-xylulose-5-phosphate (DXP). This Anaeromyxobacter sp. (strain K) protein is 1-deoxy-D-xylulose-5-phosphate synthase.